The chain runs to 368 residues: Putative potassium channel KAT5 (368 aa).

The next 3 membrane-spanning stretches (helical) occupy residues 33 to 53 (WWHMFLIMLVLYSAWASPFEL), 97 to 117 (LLNLLRLWRLRCASKLFARVE), and 132 to 152 (LLCVTLFALHFAACIYLWMVF). An intramembrane region (pore-forming) is located at residues 180 to 199 (CAVYWSITTLATVGYGDLHA). A helical membrane pass occupies residues 206–226 (LFSIAFMLFNMGLTSYIIGNI). 225 to 344 (NITNLVVRET…CIVFSNFILV (120 aa)) contributes to the a nucleoside 3',5'-cyclic phosphate binding site.

Belongs to the potassium channel family. Plant (TC 1.A.1.4) subfamily.

Its subcellular location is the membrane. Functionally, putative inward-rectifying potassium channel. The polypeptide is Putative potassium channel KAT5 (Oryza sativa subsp. japonica (Rice)).